The chain runs to 465 residues: SET domain-containing protein 3 (465 aa).

Positions 18–265 constitute an SET domain; it reads DKVTVKWDKK…AREELLDSYG (248 aa).

It belongs to the class V-like SAM-binding methyltransferase superfamily.

The chain is SET domain-containing protein 3 (set-3) from Caenorhabditis elegans.